We begin with the raw amino-acid sequence, 101 residues long: Small ribosomal subunit protein uS14 (101 aa).

It belongs to the universal ribosomal protein uS14 family. In terms of assembly, part of the 30S ribosomal subunit. Contacts proteins S3 and S10.

Binds 16S rRNA, required for the assembly of 30S particles and may also be responsible for determining the conformation of the 16S rRNA at the A site. This is Small ribosomal subunit protein uS14 from Leifsonia xyli subsp. xyli (strain CTCB07).